A 582-amino-acid polypeptide reads, in one-letter code: Kelch-like protein diablo (582 aa).

The interval 1-22 (MGDVLISDRPPSPARLSHTSEK) is disordered. Residues 41 to 108 (CDVVINVSGR…CYTSHIVVEE (68 aa)) enclose the BTB domain. A BACK domain is found at 143–245 (CLGIRAFADT…SPKFLVGTVG (103 aa)). Kelch repeat units follow at residues 292 to 338 (VLFA…VLND), 340 to 386 (LYAV…VLDG), 387 to 433 (FLYA…VLGG), 435 to 480 (LYAI…VFNN), 482 to 527 (IYAV…VVNG), and 528 to 574 (QLYA…VMRA).

The protein operates within protein modification; protein ubiquitination. In terms of biological role, probable substrate-specific adapter of an E3 ubiquitin-protein ligase complex which mediates the ubiquitination and subsequent proteasomal degradation of target proteins. May have a role in synapse differentiation and growth. This is Kelch-like protein diablo from Culex quinquefasciatus (Southern house mosquito).